Here is a 305-residue protein sequence, read N- to C-terminus: DNA-directed RNA polymerase 35 kDa subunit (305 aa).

It belongs to the poxviridae DNA-directed RNA polymerase 35 kDa subunit family. In terms of assembly, the DNA-dependent RNA polymerase used for intermediate and late genes expression consists of eight subunits 147 kDa, 133 kDa, 35 kDa, 30 kDa, 22 kDa, 19 kDa, 18 kDa and 7 kDa totalling more than 500 kDa in mass. The same holoenzyme, with the addition of the transcription-specificity factor RAP94, is used for early gene expression.

The protein resides in the virion. It catalyses the reaction RNA(n) + a ribonucleoside 5'-triphosphate = RNA(n+1) + diphosphate. Its function is as follows. Part of the DNA-dependent RNA polymerase which catalyzes the transcription of viral DNA into RNA using the four ribonucleoside triphosphates as substrates. Responsible for the transcription of early, intermediate and late genes. DNA-dependent RNA polymerase associates with the early transcription factor (ETF), itself composed of D6 and A7, thereby allowing the early genes transcription. Late transcription, and probably also intermediate transcription, require newly synthesized RNA polymerase. The polypeptide is DNA-directed RNA polymerase 35 kDa subunit (OPG156) (Variola virus (isolate Human/India/Ind3/1967) (VARV)).